A 155-amino-acid polypeptide reads, in one-letter code: Transcriptional repressor NrdR (155 aa).

A zinc finger spans residues 3–34 (CPFCGHSSTQVLDSRVSEDGDTVRRRRRCEAC). Positions 49 to 139 (PAIVKKNGSR…VYRSFEDVSE (91 aa)) constitute an ATP-cone domain.

The protein belongs to the NrdR family. Zn(2+) serves as cofactor.

Negatively regulates transcription of bacterial ribonucleotide reductase nrd genes and operons by binding to NrdR-boxes. The polypeptide is Transcriptional repressor NrdR (Cupriavidus metallidurans (strain ATCC 43123 / DSM 2839 / NBRC 102507 / CH34) (Ralstonia metallidurans)).